Consider the following 842-residue polypeptide: Envelope glycoprotein gp160 (842 aa).

Residues 1-23 (MGMKSGWLLFYLLVSLIKVIGSE) form the signal peptide. The Extracellular segment spans residues 24 to 663 (QHWVTVYYGV…ITKWLWYIKI (640 aa)). The cysteines at positions 45 and 65 are disulfide-linked. N-linked (GlcNAc...) asparagine; by host glycans are attached at residues asparagine 79, asparagine 123, asparagine 131, asparagine 134, asparagine 149, asparagine 153, asparagine 181, asparagine 190, asparagine 225, asparagine 229, asparagine 234, asparagine 255, asparagine 267, asparagine 278, asparagine 284, asparagine 290, asparagine 320, asparagine 331, and asparagine 345. 5 cysteine pairs are disulfide-bonded: cysteine 110-cysteine 198, cysteine 117-cysteine 189, cysteine 122-cysteine 150, cysteine 211-cysteine 240, and cysteine 221-cysteine 232. The tract at residues 122 to 149 (CNDSYGEERNNTNMTTREPDIGYKQMKN) is V1. The interval 150-189 (CSFNATTELTDKKKQVYSLFYVEDVVPINAYNKTYRLINC) is V2. The segment at 285 to 318 (CTRPGNNTGGQVQIGPAMTFYNIEKIVGDIRQAY) is V3. Cysteine 285 and cysteine 319 form a disulfide bridge. Residues 353–363 (RNEGDLEVTHL) form a CD4-binding loop region. Cystine bridges form between cysteine 367/cysteine 423 and cysteine 374/cysteine 396. The V4 stretch occupies residues 374-396 (CNTSKLFNEELLNETGEPITLPC). 4 N-linked (GlcNAc...) asparagine; by host glycosylation sites follow: asparagine 375, asparagine 386, asparagine 422, and asparagine 426. V5 stretches follow at residues 439 to 448 (DTKETIVYPS) and 441 to 448 (KETIVYPS). A fusion peptide region spans residues 489-510 (AAFGLGALFLGFLGAAGSTMGA). Residues 552-570 (KQLQAKVLAIERYLRDQQI) are immunosuppression. The cysteines at positions 576 and 582 are disulfide-linked. N-linked (GlcNAc...) asparagine; by host glycosylation is found at asparagine 589, asparagine 594, asparagine 595, asparagine 604, and asparagine 616. The stretch at 612-646 (EKVRNYSGVIFGLIEQAQEQQNTNEKSLLELDQWD) forms a coiled coil. An MPER; binding to GalCer region spans residues 641–662 (ELDQWDSLWSWFGITKWLWYIK). A helical transmembrane segment spans residues 664 to 684 (AIMIVAGIVGIRIISIVITII). The Cytoplasmic portion of the chain corresponds to 685–842 (ARVRQGYSPL…IRQGLERALI (158 aa)). The short motif at 691–694 (YSPL) is the YXXL motif; contains endocytosis signal element.

It belongs to the HIV-1 env protein family. As to quaternary structure, the mature envelope protein (Env) consists of a homotrimer of non-covalently associated gp120-gp41 heterodimers. The resulting complex protrudes from the virus surface as a spike. There seems to be as few as 10 spikes on the average virion. Interacts with host CD4, CCR5 and CXCR4. Gp120 also interacts with the C-type lectins CD209/DC-SIGN and CLEC4M/DC-SIGNR (collectively referred to as DC-SIGN(R)). Gp120 and gp41 interact with GalCer. Gp120 interacts with host ITGA4/ITGB7 complex; on CD4+ T-cells, this interaction results in rapid activation of integrin ITGAL/LFA-1, which facilitates efficient cell-to-cell spreading of HIV-1. Gp120 interacts with cell-associated heparan sulfate; this interaction increases virus infectivity on permissive cells and may be involved in infection of CD4- cells. The mature envelope protein (Env) consists of a homotrimer of non-covalently associated gp120-gp41 heterodimers. The resulting complex protrudes from the virus surface as a spike. There seems to be as few as 10 spikes on the average virion. Post-translationally, highly glycosylated by host. The high number of glycan on the protein is reffered to as 'glycan shield' because it contributes to hide protein sequence from adaptive immune system. Palmitoylation of the transmembrane protein and of Env polyprotein (prior to its proteolytic cleavage) is essential for their association with host cell membrane lipid rafts. Palmitoylation is therefore required for envelope trafficking to classical lipid rafts, but not for viral replication. In terms of processing, specific enzymatic cleavages in vivo yield mature proteins. Envelope glycoproteins are synthesized as an inactive precursor that is heavily N-glycosylated and processed likely by host cell furin in the Golgi to yield the mature SU and TM proteins. The cleavage site between SU and TM requires the minimal sequence [KR]-X-[KR]-R. About 2 of the 9 disulfide bonds of gp41 are reduced by P4HB/PDI, following binding to CD4 receptor.

The protein localises to the virion membrane. The protein resides in the host cell membrane. It localises to the host endosome membrane. Oligomerizes in the host endoplasmic reticulum into predominantly trimers. In a second time, gp160 transits in the host Golgi, where glycosylation is completed. The precursor is then proteolytically cleaved in the trans-Golgi and thereby activated by cellular furin or furin-like proteases to produce gp120 and gp41. Functionally, attaches the virus to the host lymphoid cell by binding to the primary receptor CD4. This interaction induces a structural rearrangement creating a high affinity binding site for a chemokine coreceptor like CXCR4 and/or CCR5. Acts as a ligand for CD209/DC-SIGN and CLEC4M/DC-SIGNR, which are respectively found on dendritic cells (DCs), and on endothelial cells of liver sinusoids and lymph node sinuses. These interactions allow capture of viral particles at mucosal surfaces by these cells and subsequent transmission to permissive cells. HIV subverts the migration properties of dendritic cells to gain access to CD4+ T-cells in lymph nodes. Virus transmission to permissive T-cells occurs either in trans (without DCs infection, through viral capture and transmission), or in cis (following DCs productive infection, through the usual CD4-gp120 interaction), thereby inducing a robust infection. In trans infection, bound virions remain infectious over days and it is proposed that they are not degraded, but protected in non-lysosomal acidic organelles within the DCs close to the cell membrane thus contributing to the viral infectious potential during DCs' migration from the periphery to the lymphoid tissues. On arrival at lymphoid tissues, intact virions recycle back to DCs' cell surface allowing virus transmission to CD4+ T-cells. Its function is as follows. Acts as a class I viral fusion protein. Under the current model, the protein has at least 3 conformational states: pre-fusion native state, pre-hairpin intermediate state, and post-fusion hairpin state. During fusion of viral and target intracellular membranes, the coiled coil regions (heptad repeats) assume a trimer-of-hairpins structure, positioning the fusion peptide in close proximity to the C-terminal region of the ectodomain. The formation of this structure appears to drive apposition and subsequent fusion of viral and target cell membranes. Complete fusion occurs in host cell endosomes and is dynamin-dependent, however some lipid transfer might occur at the plasma membrane. The virus undergoes clathrin-dependent internalization long before endosomal fusion, thus minimizing the surface exposure of conserved viral epitopes during fusion and reducing the efficacy of inhibitors targeting these epitopes. Membranes fusion leads to delivery of the nucleocapsid into the cytoplasm. The sequence is that of Envelope glycoprotein gp160 from Human immunodeficiency virus type 1 group N (isolate YBF30) (HIV-1).